Reading from the N-terminus, the 312-residue chain is Acetaldehyde dehydrogenase (312 aa).

11-14 (SGNI) serves as a coordination point for NAD(+). Residue Cys129 is the Acyl-thioester intermediate of the active site. NAD(+) is bound by residues 160–168 (SAGPGTRAN) and Asn287.

This sequence belongs to the acetaldehyde dehydrogenase family.

The catalysed reaction is acetaldehyde + NAD(+) + CoA = acetyl-CoA + NADH + H(+). The sequence is that of Acetaldehyde dehydrogenase (xylQ) from Sphingobium yanoikuyae (Sphingomonas yanoikuyae).